We begin with the raw amino-acid sequence, 387 residues long: Chorismate synthase (387 aa).

Residues arginine 39 and arginine 45 each contribute to the NADP(+) site. The tract at residues 92–113 is disordered; the sequence is PVEEGSEEKRRVSRPRPGHADL. FMN is bound by residues 130-132, 250-251, glycine 295, 310-314, and arginine 336; these read RSS, QA, and KPIPT.

It belongs to the chorismate synthase family. As to quaternary structure, homotetramer. It depends on FMNH2 as a cofactor.

The enzyme catalyses 5-O-(1-carboxyvinyl)-3-phosphoshikimate = chorismate + phosphate. It functions in the pathway metabolic intermediate biosynthesis; chorismate biosynthesis; chorismate from D-erythrose 4-phosphate and phosphoenolpyruvate: step 7/7. Catalyzes the anti-1,4-elimination of the C-3 phosphate and the C-6 proR hydrogen from 5-enolpyruvylshikimate-3-phosphate (EPSP) to yield chorismate, which is the branch point compound that serves as the starting substrate for the three terminal pathways of aromatic amino acid biosynthesis. This reaction introduces a second double bond into the aromatic ring system. This is Chorismate synthase from Brevibacillus brevis (strain 47 / JCM 6285 / NBRC 100599).